A 185-amino-acid chain; its full sequence is MPFYEIFIISVALAMDAFTIAVACGLCMPEVSKRQNFRLSFHFGLFQALMPLLGWLAGLTVKSMVETYAPWISFFLLAFVGGKMIQESFETDDSCDTYKDPTKGLSLVFLSVATSLDALAVGLSFSIMDYPIAFPCVMIGITALVLTSFGLWLGKSFAKASSYSHIAERIGGVVLILIGLKLLLQ.

Helical transmembrane passes span 6–26, 41–61, 65–85, 107–127, 132–152, and 164–184; these read IFII…ACGL, FHFG…GLTV, VETY…GKMI, LVFL…SFSI, IAFP…FGLW, and SHIA…KLLL.

It belongs to the MntP (TC 9.B.29) family.

The protein resides in the cell inner membrane. Functionally, probably functions as a manganese efflux pump. The protein is Putative manganese efflux pump MntP of Maridesulfovibrio salexigens (strain ATCC 14822 / DSM 2638 / NCIMB 8403 / VKM B-1763) (Desulfovibrio salexigens).